Consider the following 405-residue polypeptide: MSDSIKRVVLAYSGGLDTSVILKWLQVTYGCEVVTFTADLGQGEELEPARAKAELMGIKPEHIYIDDLREEFVRDFVFPMMRANARYEGDYLLGTSIARPLISKRLVEIARETGADAVAHGATGKGNDQVRFELSAYALNPDIKVIAPWREWDLTSRTALIAWAEQHQIPVPKDKRGESPFSTDANLLHTSSEGKVLEDPWEETPDYVYSRTVNPEDAPDTPEYITIDFERGDGVALNGQAMSPATLLAALNDLGRKHGIGRLDLVENRFVGMKSRGMYETPGGEIYARAHRGIESITLDRGAAHLKDELMPKYAELIYNGFWFAPEREMLQAAIDHSQANVTGTVRLKLYKGNASVVGRKSPFSLYSERHVTFEDDAGAYDQKDAAGFIRLNALRLKLLARQGR.

Residues alanine 11–serine 19 and alanine 38 contribute to the ATP site. L-citrulline contacts are provided by tyrosine 91 and serine 96. Glycine 121 contacts ATP. L-aspartate is bound by residues threonine 123, asparagine 127, and aspartate 128. Asparagine 127 contacts L-citrulline. The L-citrulline site is built by arginine 131, serine 182, serine 191, glutamate 267, and tyrosine 279.

Belongs to the argininosuccinate synthase family. Type 1 subfamily. In terms of assembly, homotetramer.

It is found in the cytoplasm. The catalysed reaction is L-citrulline + L-aspartate + ATP = 2-(N(omega)-L-arginino)succinate + AMP + diphosphate + H(+). The protein operates within amino-acid biosynthesis; L-arginine biosynthesis; L-arginine from L-ornithine and carbamoyl phosphate: step 2/3. This chain is Argininosuccinate synthase, found in Sphingopyxis alaskensis (strain DSM 13593 / LMG 18877 / RB2256) (Sphingomonas alaskensis).